A 215-amino-acid polypeptide reads, in one-letter code: Adenylate kinase (215 aa).

Position 10–15 (10–15 (GAGKGT)) interacts with ATP. Residues 30–59 (STGDMLRAAIKAGTPLGLEAKKIIDEGGLV) form an NMP region. AMP-binding positions include Thr31, Arg36, 57–59 (GLV), 85–88 (GFPR), and Gln92. Residues 122-159 (GRRVHLASGRTYHVTYNPPKVEGKDDVTGEDLIQRDDD) are LID. ATP-binding positions include Arg123 and 132-133 (TY). Arg156 and Arg167 together coordinate AMP. Gln200 lines the ATP pocket.

The protein belongs to the adenylate kinase family. In terms of assembly, monomer.

It localises to the cytoplasm. The enzyme catalyses AMP + ATP = 2 ADP. It functions in the pathway purine metabolism; AMP biosynthesis via salvage pathway; AMP from ADP: step 1/1. Catalyzes the reversible transfer of the terminal phosphate group between ATP and AMP. Plays an important role in cellular energy homeostasis and in adenine nucleotide metabolism. This is Adenylate kinase from Neisseria meningitidis serogroup C (strain 053442).